Here is a 351-residue protein sequence, read N- to C-terminus: Sulfate/thiosulfate import ATP-binding protein CysA (351 aa).

Positions 3-237 constitute an ABC transporter domain; it reads ITVRNLHKRF…PRSAFVYEFL (235 aa). 35–42 serves as a coordination point for ATP; it reads GPSGCGKT.

It belongs to the ABC transporter superfamily. Sulfate/tungstate importer (TC 3.A.1.6) family. In terms of assembly, the complex is composed of two ATP-binding proteins (CysA), two transmembrane proteins (CysT and CysW) and a solute-binding protein (CysP).

Its subcellular location is the cell inner membrane. The enzyme catalyses sulfate(out) + ATP + H2O = sulfate(in) + ADP + phosphate + H(+). The catalysed reaction is thiosulfate(out) + ATP + H2O = thiosulfate(in) + ADP + phosphate + H(+). Its function is as follows. Part of the ABC transporter complex CysAWTP involved in sulfate/thiosulfate import. Responsible for energy coupling to the transport system. The protein is Sulfate/thiosulfate import ATP-binding protein CysA of Burkholderia mallei (strain ATCC 23344).